A 729-amino-acid chain; its full sequence is Putative cyclic nucleotide-gated ion channel 19 (729 aa).

At 1-172 (MAHTRTFTSR…SKFVQVWTRV (172 aa)) the chain is on the cytoplasmic side. Positions 52–82 (SGPIHSTRRTEPLFSPSPQESPDSSSTVDVP) are disordered. Over residues 67–81 (PSPQESPDSSSTVDV) the composition is skewed to low complexity. The chain crosses the membrane as a helical span at residues 173–193 (LAFSSLVAIFIDPLFFFLLLI). Over 194-208 (QQDNKCIAIDWRATK) the chain is Extracellular. A helical membrane pass occupies residues 209–229 (VLVSLRSITDLIFFINILLQF). Residues 230–261 (RLAYVAPESRIVGAGQLVDHPRKIARHYFRGK) lie on the Cytoplasmic side of the membrane. A helical membrane pass occupies residues 262–282 (FLLDMFIVFPIPQIMILRIIP). Residues 283–295 (LHLGTRREESEKQ) lie on the Extracellular side of the membrane. The chain crosses the membrane as a helical span at residues 296-316 (ILRATVLFQYIPKLYRLLPLL). At 317-332 (AGQTSTGFIFESAWAN) the chain is on the cytoplasmic side. The chain crosses the membrane as a helical span at residues 333-353 (FVINLLTFMLAGHAVGSCWYL). Residues 354-451 (SALQRVKKCM…STLAGNLSPS (98 aa)) are Extracellular-facing. Residues 452–472 (YSVGEVFFTMGIIGLGLLLFA) form a helical membrane-spanning segment. Residues 473–729 (RLIGNMHNFL…LNTAHSNSNR (257 aa)) are Cytoplasmic-facing. A nucleoside 3',5'-cyclic phosphate is bound by residues 560-677 (IFSL…VTSL) and Glu-625. The tract at residues 678 to 694 (FSRFLRSHRVQGAIRYE) is calmodulin-binding. The 30-residue stretch at 699–728 (RLRAAMQIQVAWRYRKRQLQRLNTAHSNSN) folds into the IQ domain.

It belongs to the cyclic nucleotide-gated cation channel (TC 1.A.1.5) family. In terms of assembly, homotetramer or heterotetramer.

It is found in the cell membrane. In terms of biological role, putative cyclic nucleotide-gated ion channel. In Arabidopsis thaliana (Mouse-ear cress), this protein is Putative cyclic nucleotide-gated ion channel 19 (CNGC19).